The sequence spans 269 residues: Interleukin-1 beta (269 aa).

Positions 1–116 (MAEVPELASE…TRNNDACVHD (116 aa)) are excised as a propeptide.

The protein belongs to the IL-1 family. As to quaternary structure, monomer. In its precursor form, weakly interacts with full-length MEFV; the mature cytokine does not interact at all. Interacts with integrins ITGAV:ITGBV and ITGA5:ITGB1; integrin-binding is required for IL1B signaling. Interacts with cargo receptor TMED10; the interaction is direct and is required for the secretion of IL1B mature form. Interacts with HSP90AB1; the interaction facilitates cargo translocation into the ERGIC. Interacts with HSP90B1; the interaction facilitates cargo translocation into the ERGIC.

It localises to the cytoplasm. Its subcellular location is the cytosol. It is found in the secreted. The protein resides in the lysosome. The protein localises to the extracellular exosome. Functionally, potent pro-inflammatory cytokine. Initially discovered as the major endogenous pyrogen, induces prostaglandin synthesis, neutrophil influx and activation, T-cell activation and cytokine production, B-cell activation and antibody production, and fibroblast proliferation and collagen production. Promotes Th17 differentiation of T-cells. Synergizes with IL12/interleukin-12 to induce IFNG synthesis from T-helper 1 (Th1) cells. Plays a role in angiogenesis by inducing VEGF production synergistically with TNF and IL6. Involved in transduction of inflammation downstream of pyroptosis: its mature form is specifically released in the extracellular milieu by passing through the gasdermin-D (GSDMD) pore. The protein is Interleukin-1 beta (IL1B) of Macaca mulatta (Rhesus macaque).